Reading from the N-terminus, the 274-residue chain is Large ribosomal subunit protein uL2cz/uL2cy (274 aa).

Residues 225 to 274 are disordered; that stretch reads PVDHPHGGGEGRAPIGRKKPVTPWGYPALGRRTRKRKKYSETLILRRRSK.

The protein belongs to the universal ribosomal protein uL2 family. Part of the 50S ribosomal subunit.

It localises to the plastid. It is found in the chloroplast. This is Large ribosomal subunit protein uL2cz/uL2cy (rpl2-A) from Crucihimalaya wallichii (Rock-cress).